The following is a 487-amino-acid chain: Inosine-5'-monophosphate dehydrogenase (487 aa).

CBS domains are found at residues 93–149 and 153–214; these read IVSD…NKTV and MTPK…CKDE. NAD(+) is bound by residues Asp-248, 248 to 250, and 298 to 300; these read DSS and GIG. The K(+) site is built by Gly-300 and Gly-302. An IMP-binding site is contributed by Ser-303. K(+) is bound at residue Cys-305. Cys-305 (thioimidate intermediate) is an active-site residue. IMP-binding positions include 338 to 340, 361 to 362, and 385 to 389; these read DGG, GS, and YRGMG. Arg-401 serves as the catalytic Proton acceptor. An IMP-binding site is contributed by Glu-415. K(+) contacts are provided by Glu-469, Ser-470, and His-471.

The protein belongs to the IMPDH/GMPR family. In terms of assembly, homotetramer. The cofactor is K(+).

It carries out the reaction IMP + NAD(+) + H2O = XMP + NADH + H(+). It functions in the pathway purine metabolism; XMP biosynthesis via de novo pathway; XMP from IMP: step 1/1. Its activity is regulated as follows. Mycophenolic acid (MPA) is a non-competitive inhibitor that prevents formation of the closed enzyme conformation by binding to the same site as the amobile flap. In contrast, mizoribine monophosphate (MZP) is a competitive inhibitor that induces the closed conformation. MPA is a potent inhibitor of mammalian IMPDHs but a poor inhibitor of the bacterial enzymes. MZP is a more potent inhibitor of bacterial IMPDH. Catalyzes the conversion of inosine 5'-phosphate (IMP) to xanthosine 5'-phosphate (XMP), the first committed and rate-limiting step in the de novo synthesis of guanine nucleotides, and therefore plays an important role in the regulation of cell growth. The sequence is that of Inosine-5'-monophosphate dehydrogenase from Pasteurella multocida (strain Pm70).